The primary structure comprises 658 residues: Integrator complex subunit 9 (658 aa).

1D-myo-inositol hexakisphosphate contacts are provided by Lys-2 and Phe-19. Lys-58 participates in a covalent cross-link: Glycyl lysine isopeptide (Lys-Gly) (interchain with G-Cter in SUMO2). 2 residues coordinate 1D-myo-inositol hexakisphosphate: Lys-510 and Arg-511. A disordered region spans residues 548–574; the sequence is DNKHLLQPPPRPAQPTSGKKRKRVSDD. The Nuclear localization signal motif lies at 566–570; that stretch reads KKRKR.

The protein belongs to the metallo-beta-lactamase superfamily. RNA-metabolizing metallo-beta-lactamase-like family. INTS9 subfamily. In terms of assembly, component of the Integrator complex, composed of core subunits INTS1, INTS2, INTS3, INTS4, INTS5, INTS6, INTS7, INTS8, INTS9/RC74, INTS10, INTS11/CPSF3L, INTS12, INTS13, INTS14 and INTS15. The core complex associates with protein phosphatase 2A subunits PPP2CA and PPP2R1A, to form the Integrator-PP2A (INTAC) complex. INTS9 is part of the RNA endonuclease subcomplex, composed of INTS4, INTS9, INTS11 and inositol hexakisphosphate (InsP6). Interacts with WDR73; interaction is required for the assembly of the RNA endonuclease subcomplex in the cytoplasm. Interacts with BRAT1; interaction is required for the assembly of the RNA endonuclease subcomplex. Interacts with ESRRB, ESRRB is not a core component of the Integrator complex and this association is a bridge for the interaction with the multiprotein complex Integrator; attracts the transcriptional machinery.

Its subcellular location is the nucleus. It localises to the cytoplasm. Component of the integrator complex, a multiprotein complex that terminates RNA polymerase II (Pol II) transcription in the promoter-proximal region of genes. The integrator complex provides a quality checkpoint during transcription elongation by driving premature transcription termination of transcripts that are unfavorably configured for transcriptional elongation: the complex terminates transcription by (1) catalyzing dephosphorylation of the C-terminal domain (CTD) of Pol II subunit POLR2A/RPB1 and SUPT5H/SPT5, (2) degrading the exiting nascent RNA transcript via endonuclease activity and (3) promoting the release of Pol II from bound DNA. The integrator complex is also involved in terminating the synthesis of non-coding Pol II transcripts, such as enhancer RNAs (eRNAs), small nuclear RNAs (snRNAs), telomerase RNAs and long non-coding RNAs (lncRNAs). Mediates recruitment of cytoplasmic dynein to the nuclear envelope, probably as component of the integrator complex. The protein is Integrator complex subunit 9 of Homo sapiens (Human).